Consider the following 316-residue polypeptide: DDRGK domain-containing protein 1 (316 aa).

Over 1 to 3 the chain is Lumenal; that stretch reads MVE. The chain crosses the membrane as a helical span at residues 4 to 24; sequence LDYLFLGSVGFLTIALMLIIL. Residues 25–316 lie on the Cytoplasmic side of the membrane; that stretch reads RIIKLYFDEK…VEHVSELTAA (292 aa). The tract at residues 147 to 187 is disordered; sequence LEQEKEKRLQKEREKQMEQEEEERKRKCREREEREKREEEE.

The protein belongs to the DDRGK1 family.

It is found in the endoplasmic reticulum membrane. Substrate adapter for ufmylation, the covalent attachment of the ubiquitin-like modifier UFM1 to substrate proteins. This is DDRGK domain-containing protein 1 from Brugia malayi (Filarial nematode worm).